A 464-amino-acid chain; its full sequence is GTPase Der (464 aa).

2 consecutive EngA-type G domains span residues 3–166 (ALVA…PVLE) and 177–350 (LQFA…QSAN). Residues 9–16 (GRPNVGKS), 56–60 (DTGGV), 118–121 (NKAE), 183–190 (GRPNVGKS), 230–234 (DTAGI), and 295–298 (NKWD) each bind GTP. Residues 351 to 435 (SHLPTGELNR…PIALEFRTVK (85 aa)) form the KH-like domain.

Belongs to the TRAFAC class TrmE-Era-EngA-EngB-Septin-like GTPase superfamily. EngA (Der) GTPase family. Associates with the 50S ribosomal subunit.

GTPase that plays an essential role in the late steps of ribosome biogenesis. In Nitrosococcus oceani (strain ATCC 19707 / BCRC 17464 / JCM 30415 / NCIMB 11848 / C-107), this protein is GTPase Der.